Here is a 155-residue protein sequence, read N- to C-terminus: Protein FAM162A (155 aa).

Residues 77–103 form a required for proapoptotic activity region; the sequence is RFKKEEEIPETISFEMLDAAKNKIRVK. A helical transmembrane segment spans residues 102–121; it reads VKVSYLMIALTVAGCVYMVI.

It belongs to the UPF0389 family. Interacts with HSP90AB1; HSP90AB1 is essential for FAM162A mitochondrial localization and pro-apoptotic activity. Interacts with VDAC2; the interaction is probably involved in inducing mitochondrial permeability transition.

It is found in the mitochondrion membrane. Proposed to be involved in regulation of apoptosis; the exact mechanism may differ between cell types/tissues. May be involved in hypoxia-induced cell death of transformed cells implicating cytochrome C release and caspase activation (such as CASP9) and inducing mitochondrial permeability transition. May be involved in hypoxia-induced cell death of neuronal cells probably by promoting release of AIFM1 from mitochondria to cytoplasm and its translocation to the nucleus; however, the involvement of caspases has been reported conflictingly. In Rattus norvegicus (Rat), this protein is Protein FAM162A (Fam162a).